A 367-amino-acid polypeptide reads, in one-letter code: MTAHRDAIRTARSMVVKVGTNALTTPAGVFDAGRLAGLADAIEARMKAGTDVVIVSSGAIAAGIEPLGLSRRPRDLATKQAAASVGQVALVNSWSAAFARYGRTVGQVLLSAHDISMRAQHTNAQRTLDRLRALHAVAIVNENDTVATNEIRFGDNDRLSALVAHLVGAEALVLLSDIDGLYDSDPRKTKGAKFIPEVTGAEDLAGVVAGPGSDLGTGGMTSKMSSALLAADAGVPVLLAAAADAASALTDASVGTVFAARPVRMSARRFWVRYAAEAAGALTLDEGAVRAVVHQRRSLLPAGITAVSGRFYAGDVVELRGPDAVPVARGVVAYDTTELATMMGRSTSELPGELRRPAVHADDLVAV.

Lys-17 contacts ATP. Substrate contacts are provided by Ser-57, Asp-144, and Asn-156. Residues 176–177 and 217–223 each bind ATP; these read SD and TGGMTSK. The region spanning 279–357 is the PUA domain; the sequence is AGALTLDEGA…SELPGELRRP (79 aa).

Belongs to the glutamate 5-kinase family.

Its subcellular location is the cytoplasm. The catalysed reaction is L-glutamate + ATP = L-glutamyl 5-phosphate + ADP. It functions in the pathway amino-acid biosynthesis; L-proline biosynthesis; L-glutamate 5-semialdehyde from L-glutamate: step 1/2. In terms of biological role, catalyzes the transfer of a phosphate group to glutamate to form L-glutamate 5-phosphate. This Mycolicibacterium paratuberculosis (strain ATCC BAA-968 / K-10) (Mycobacterium paratuberculosis) protein is Glutamate 5-kinase.